We begin with the raw amino-acid sequence, 272 residues long: Ribosomal RNA small subunit methyltransferase A (272 aa).

Residues Asn-18, Leu-20, Gly-45, Glu-66, Asp-91, and Asn-113 each coordinate S-adenosyl-L-methionine.

It belongs to the class I-like SAM-binding methyltransferase superfamily. rRNA adenine N(6)-methyltransferase family. RsmA subfamily.

The protein resides in the cytoplasm. The enzyme catalyses adenosine(1518)/adenosine(1519) in 16S rRNA + 4 S-adenosyl-L-methionine = N(6)-dimethyladenosine(1518)/N(6)-dimethyladenosine(1519) in 16S rRNA + 4 S-adenosyl-L-homocysteine + 4 H(+). Specifically dimethylates two adjacent adenosines (A1518 and A1519) in the loop of a conserved hairpin near the 3'-end of 16S rRNA in the 30S particle. May play a critical role in biogenesis of 30S subunits. This chain is Ribosomal RNA small subunit methyltransferase A, found in Pectobacterium atrosepticum (strain SCRI 1043 / ATCC BAA-672) (Erwinia carotovora subsp. atroseptica).